A 1136-amino-acid polypeptide reads, in one-letter code: Phytochrome (1136 aa).

A disordered region spans residues 1-28 (MSTTRPRAATHSASSGSVSRSSKHSARV). Positions 11-20 (HSASSGSVSR) are enriched in low complexity. The GAF domain occupies 231–414 (DIRLLCDTVV…VFGIQLNKEV (184 aa)). Residue C336 participates in phytochromobilin binding. 2 consecutive PAS domains span residues 629–699 (VTNE…LQGE) and 762–833 (DYRA…TKLR). The region spanning 913 to 1132 (YIRQEIRNPL…IINVEFPLAQ (220 aa)) is the Histidine kinase domain.

It belongs to the phytochrome family. As to quaternary structure, homodimer. Post-translationally, contains one covalently linked phytochromobilin chromophore.

Its function is as follows. Regulatory photoreceptor which exists in two forms that are reversibly interconvertible by light: the Pr form that absorbs maximally in the red region of the spectrum and the Pfr form that absorbs maximally in the far-red region. Photoconversion of Pr to Pfr induces an array of morphogenic responses, whereas reconversion of Pfr to Pr cancels the induction of those responses. Pfr controls the expression of a number of nuclear genes including those encoding the small subunit of ribulose-bisphosphate carboxylase, chlorophyll A/B binding protein, protochlorophyllide reductase, rRNA, etc. It also controls the expression of its own gene(s) in a negative feedback fashion. The polypeptide is Phytochrome (Picea abies (Norway spruce)).